A 1071-amino-acid polypeptide reads, in one-letter code: Nonribosomal peptide synthetase flvI (1071 aa).

The adenylation stretch occupies residues 33 to 417 (RRVLEQHDAP…GSLHFISRKD (385 aa)). The Carrier domain maps to 552–628 (MPLTEIELKM…MLCQNIKTDV (77 aa)). An O-(pantetheine 4'-phosphoryl)serine modification is found at S589. Residues 689 to 961 (NYTLRLEFKL…IDDRDIEQLS (273 aa)) are condensation.

This sequence belongs to the NRP synthetase family.

The enzyme catalyses (2S)-5,5-dimethylpiperidine-2-carboxylate + 10-hydroxy-pre-flavunoidine + ATP = flavunoidine + AMP + diphosphate + H(+). It functions in the pathway secondary metabolite biosynthesis; terpenoid biosynthesis. Its function is as follows. Nonribosomal peptide synthetase; part of the gene cluster that mediates the biosynthesis of flavunoidine, an alkaloidal terpenoid with a tetracyclic cage-like core connected to dimethylcadaverine via a C-N bond and acylated with 5,5-dimethyl-L-pipecolate. The tetracyclic core is synthesized by the terpene cyclase flvE and the cytochrome P450 monooxygenase flvD. The terpene cyclase flvE catalyzes the cyclization of farnesyl pyrophosphate (FPP) to form (1R,4R,5S)-(+)-acoradiene and the cytochrome P450 monooxygenase flvD is then responsible for oxidative conversion of (1R,4R,5S)-(+)-acoradiene into the tetracyclic cage present in the final product flavunoidine. In parallel, the N-methyltransferase flvH dimethylates L-lysine to give N,N-dimethyl-L-Lysin which is decarboxylated by flvG to afford dimethylcadaverine. The terpene cyclase-like protein flvF is the enzyme that attaches the dimethylcadaverine precusor at the C-7 of the tetracyclic cage to yield pre-flavunoidine. The cytochrome monooxygenase flvC hydroxylates the C-10 position of pre-flavunoidine whereas the NRPS flvI acylates the terpenoid core at the hydroxylated C-10 with dimethylpipecolate to yield final flavunoidine. The bifunctional enzyme flvA and the dehydrogenase flvB are responsible for the synthesis of the dimethylpipecolate precursor. The PLP-dependent lyase domain of flvA might use L-O-acetyl-homoserine and alpha-keto-isovalerate to form an intermediary ketone that can cyclize intramolecularly to yield an imine. The imine can be reduced by flvB to yield the 6-carboxylated pipecolate. The C-terminal alpha-KG-dependent oxygenase domain of flvA is then proposed to catalyze the decarboxylation to yield dimethylpipecolate. The sequence is that of Nonribosomal peptide synthetase flvI from Aspergillus flavus (strain ATCC 200026 / FGSC A1120 / IAM 13836 / NRRL 3357 / JCM 12722 / SRRC 167).